A 631-amino-acid chain; its full sequence is Leukocyte immunoglobulin-like receptor subfamily B member 3 (631 aa).

The first 23 residues, 1–23 (MTPALTALLCLGLSLGPRTRVQA), serve as a signal peptide directing secretion. Topologically, residues 24 to 443 (GPFPKPTLWA…STPGLGRYLE (420 aa)) are extracellular. 4 consecutive Ig-like C2-type domains span residues 42–100 (GSPV…RCHY), 111–229 (DPLE…SLLT), 225–314 (PSLL…DPLN), and 338–419 (GENV…LVVS). Cysteines 49 and 98 form a disulfide. The span at 59–70 (RLHKEGSPEPLD) shows a compositional bias: basic and acidic residues. Positions 59–78 (RLHKEGSPEPLDRNNPLEPK) are disordered. Asn139 carries an N-linked (GlcNAc...) asparagine glycan. Cystine bridges form between Cys144–Cys196 and Cys245–Cys296. Asn280, Asn301, and Asn340 each carry an N-linked (GlcNAc...) asparagine glycan. Cys345 and Cys396 are disulfide-bonded. The chain crosses the membrane as a helical span at residues 444–464 (VLIGVSVAFVLLLFLLLFLLL). Residues 465–631 (RRQRHSKHRT…PSIYATLAIH (167 aa)) lie on the Cytoplasmic side of the membrane. Residues 470–631 (SKHRTSDQRK…PSIYATLAIH (162 aa)) are disordered. Residues 473 to 482 (RTSDQRKTDF) show a composition bias toward basic and acidic residues. The ITIM motif 1 signature appears at 512–517 (NLYAAV). 2 stretches are compositionally biased toward basic and acidic residues: residues 520–537 (TQSE…HDED) and 567–581 (LDTK…RQMD). The segment covering 588–600 (EASQDVTYAQLHS) has biased composition (polar residues). Short sequence motifs (ITIM motif) lie at residues 593–598 (VTYAQL) and 623–628 (SIYATL). Residues Tyr595 and Tyr625 each carry the phosphotyrosine; by LYN modification.

Interacts with LYN, PTPN6/SHP-1 and PTPN11/SHP-2. Phosphorylated on tyrosine residues by LYN. Phosphorylation at Tyr-595 and Tyr-625 is important for interaction with PTPN6/SHP-1 and PTPN11/SHP-2. Detected in monocytes and B-cells.

Its subcellular location is the cell membrane. In terms of biological role, may act as receptor for class I MHC antigens. Becomes activated upon coligation of LILRB3 and immune receptors, such as FCGR2B and the B-cell receptor. Down-regulates antigen-induced B-cell activation by recruiting phosphatases to its immunoreceptor tyrosine-based inhibitor motifs (ITIM). The polypeptide is Leukocyte immunoglobulin-like receptor subfamily B member 3 (LILRB3) (Homo sapiens (Human)).